A 197-amino-acid chain; its full sequence is Recombination protein RecR (197 aa).

A C4-type zinc finger spans residues C55 to C70. One can recognise a Toprim domain in the interval Q78–P173.

Belongs to the RecR family.

Functionally, may play a role in DNA repair. It seems to be involved in an RecBC-independent recombinational process of DNA repair. It may act with RecF and RecO. This Xanthomonas axonopodis pv. citri (strain 306) protein is Recombination protein RecR.